A 440-amino-acid polypeptide reads, in one-letter code: Thymidine phosphorylase (440 aa).

This sequence belongs to the thymidine/pyrimidine-nucleoside phosphorylase family. Homodimer.

It carries out the reaction thymidine + phosphate = 2-deoxy-alpha-D-ribose 1-phosphate + thymine. Its pathway is pyrimidine metabolism; dTMP biosynthesis via salvage pathway; dTMP from thymine: step 1/2. In terms of biological role, the enzymes which catalyze the reversible phosphorolysis of pyrimidine nucleosides are involved in the degradation of these compounds and in their utilization as carbon and energy sources, or in the rescue of pyrimidine bases for nucleotide synthesis. The protein is Thymidine phosphorylase of Serratia proteamaculans (strain 568).